A 594-amino-acid polypeptide reads, in one-letter code: Spermidine/putrescine import ATP-binding protein PotA (594 aa).

One can recognise an ABC transporter domain in the interval 24 to 435 (IEIKKINKTY…PANNWVANFI (412 aa)). ATP is bound at residue 57-64 (GPSGCGKT). The segment at 125-304 (RKPIENVSAD…EWFDKKKLTR (180 aa)) is insert.

It belongs to the ABC transporter superfamily. Spermidine/putrescine importer (TC 3.A.1.11.1) family. As to quaternary structure, the complex is composed of two ATP-binding proteins (PotA), two transmembrane proteins (PotB and PotC) and a solute-binding protein (PotD).

The protein resides in the cell membrane. The catalysed reaction is ATP + H2O + polyamine-[polyamine-binding protein]Side 1 = ADP + phosphate + polyamineSide 2 + [polyamine-binding protein]Side 1.. Functionally, part of the ABC transporter complex PotABCD involved in spermidine/putrescine import. Responsible for energy coupling to the transport system. This Malacoplasma penetrans (strain HF-2) (Mycoplasma penetrans) protein is Spermidine/putrescine import ATP-binding protein PotA.